We begin with the raw amino-acid sequence, 623 residues long: Aspartate--tRNA(Asp/Asn) ligase (623 aa).

Position 175 (Glu175) interacts with L-aspartate. The tract at residues 199-202 is aspartate; it reads QQFK. The L-aspartate site is built by Arg221 and His455. 221–223 lines the ATP pocket; it reads RDE. Glu517 contributes to the ATP binding site. Arg524 is an L-aspartate binding site. 569 to 572 is an ATP binding site; that stretch reads GVDR.

It belongs to the class-II aminoacyl-tRNA synthetase family. Type 1 subfamily. In terms of assembly, homodimer.

The protein localises to the cytoplasm. It catalyses the reaction tRNA(Asx) + L-aspartate + ATP = L-aspartyl-tRNA(Asx) + AMP + diphosphate. Functionally, aspartyl-tRNA synthetase with relaxed tRNA specificity since it is able to aspartylate not only its cognate tRNA(Asp) but also tRNA(Asn). Reaction proceeds in two steps: L-aspartate is first activated by ATP to form Asp-AMP and then transferred to the acceptor end of tRNA(Asp/Asn). The protein is Aspartate--tRNA(Asp/Asn) ligase of Methylocella silvestris (strain DSM 15510 / CIP 108128 / LMG 27833 / NCIMB 13906 / BL2).